Reading from the N-terminus, the 872-residue chain is DNA polymerase 1 (872 aa).

This sequence belongs to the DNA polymerase type-B family.

The catalysed reaction is DNA(n) + a 2'-deoxyribonucleoside 5'-triphosphate = DNA(n+1) + diphosphate. The chain is DNA polymerase 1 (pol-alpha) from Sulfurisphaera ohwakuensis.